Reading from the N-terminus, the 554-residue chain is MPTININKVDLERLSNISLSDKMIEDRFPMMGVEVEEIFEEVDKNGKKQNMVQFSINPDRPDYLSVEGLARGFRGFMGINTGIQEFEVLNSNIKVTVEENKTRPYVAFALVKNVLMDELVLESMINLQEKLHWAIGRDRKKLAIGIHDFDKVKAPFTYKEIRGDEIKFVPLGYEDEEMTPREIIEKHEKGIKYAHLIQDDKFPVIVDLNGEVLSMPPIINGTLTKVTPTSKNLLIDITGTEKEAVEETLNIIVCALAERRGTIVSVDVNGKKYPDLTPKSRMISVESINKKLGLNLNPGEIIQAVKKSGMDALYEDGNLIVKIPAYRNDILHNVDLKEEIAINYGYEKFEGKLPSVATTGSKDSVEKKCSAMSDLMIGLGFYEVMNLTLSNQDTLFEKMNLEVEEKDYIEVLKPASIEHRVLRTSILPLLLETLYINKHHSLPQKIFEIGDCVIIDENDTETDTKCKNIKKIAGAITHPLTNFNEIKSSTGALLREFFEDFEFENYEHPAFIPGRCAKIIKDRKEVGFFGEIHPEVILNFELEHPIVGFEITIE.

The 76-residue stretch at 276-351 folds into the B5 domain; it reads LTPKSRMISV…INYGYEKFEG (76 aa). Positions 329, 335, 338, and 339 each coordinate Mg(2+).

This sequence belongs to the phenylalanyl-tRNA synthetase beta subunit family. Type 2 subfamily. Tetramer of two alpha and two beta subunits. The cofactor is Mg(2+).

It localises to the cytoplasm. It catalyses the reaction tRNA(Phe) + L-phenylalanine + ATP = L-phenylalanyl-tRNA(Phe) + AMP + diphosphate + H(+). The chain is Phenylalanine--tRNA ligase beta subunit from Methanococcus maripaludis (strain C6 / ATCC BAA-1332).